We begin with the raw amino-acid sequence, 144 residues long: Maximins 3/H9 type 2 (144 aa).

The signal sequence occupies residues 1–18 (MNFKYIVAVSFLIASAYA). 2 propeptides span residues 19–43 (RSVQ…REIR) and 74–123 (TAEE…KEKR). Ile-143 carries the isoleucine amide modification.

It belongs to the bombinin family. In terms of tissue distribution, expressed by the skin glands.

The protein localises to the secreted. Its function is as follows. Maximin-3 shows antibacterial activity against both Gram-positive and Gram-negative bacteria. It also shows antimicrobial activity against the fungus C.albicans, but not against A.flavus nor P.uticale. It has little hemolytic activity. It possess a significant cytotoxicity against tumor cell lines. It possess a significant anti-HIV activity. It shows high spermicidal activity. In terms of biological role, maximin-H9 shows antimicrobial activity against bacteria and against the fungus C.albicans. Shows strong hemolytic activity. In Bombina maxima (Giant fire-bellied toad), this protein is Maximins 3/H9 type 2.